Here is a 124-residue protein sequence, read N- to C-terminus: KESPAKKFQRQHMDPDSSSSNSSNYCNLMMSRRNMTQGRCKPVNTFVHESLADVQAVCSQINVNCKNGQTNCYQSNSTMHITDCRQTGSSKYPNCAYKASQEQKHIIVACEGNPPVPVHFDASV.

A compositionally biased stretch (basic and acidic residues) spans 1–15 (KESPAKKFQRQHMDP). The interval 1–24 (KESPAKKFQRQHMDPDSSSSNSSN) is disordered. Substrate contacts are provided by K7 and R10. H12 acts as the Proton acceptor in catalysis. Residues N21 and N34 are each glycosylated (N-linked (GlcNAc...) asparagine). Cystine bridges form between C26–C84, C40–C95, C58–C110, and C65–C72. Residues 41–45 (KPVNT) and K66 each bind substrate. The N-linked (GlcNAc...) asparagine glycan is linked to N76. R85 provides a ligand contact to substrate. H119 functions as the Proton donor in the catalytic mechanism.

It belongs to the pancreatic ribonuclease family. In terms of assembly, monomer. Interacts with and forms tight 1:1 complexes with RNH1. Dimerization of two such complexes may occur. Interaction with RNH1 inhibits this protein. As to expression, pancreas.

It is found in the secreted. It carries out the reaction an [RNA] containing cytidine + H2O = an [RNA]-3'-cytidine-3'-phosphate + a 5'-hydroxy-ribonucleotide-3'-[RNA].. It catalyses the reaction an [RNA] containing uridine + H2O = an [RNA]-3'-uridine-3'-phosphate + a 5'-hydroxy-ribonucleotide-3'-[RNA].. Endonuclease that catalyzes the cleavage of RNA on the 3' side of pyrimidine nucleotides. Acts on single-stranded and double-stranded RNA. This is Ribonuclease pancreatic (RNASE1) from Sus scrofa (Pig).